The primary structure comprises 349 residues: Protein-glutamate methylesterase/protein-glutamine glutaminase (349 aa).

Residues R5 to M122 form the Response regulatory domain. D56 carries the post-translational modification 4-aspartylphosphate. The CheB-type methylesterase domain maps to L152–G344. Active-site residues include S164, H190, and D286.

It belongs to the CheB family. Post-translationally, phosphorylated by CheA. Phosphorylation of the N-terminal regulatory domain activates the methylesterase activity.

Its subcellular location is the cytoplasm. It carries out the reaction [protein]-L-glutamate 5-O-methyl ester + H2O = L-glutamyl-[protein] + methanol + H(+). The catalysed reaction is L-glutaminyl-[protein] + H2O = L-glutamyl-[protein] + NH4(+). Its function is as follows. Involved in chemotaxis. Part of a chemotaxis signal transduction system that modulates chemotaxis in response to various stimuli. Catalyzes the demethylation of specific methylglutamate residues introduced into the chemoreceptors (methyl-accepting chemotaxis proteins or MCP) by CheR. Also mediates the irreversible deamidation of specific glutamine residues to glutamic acid. In Salmonella choleraesuis (strain SC-B67), this protein is Protein-glutamate methylesterase/protein-glutamine glutaminase.